Here is a 673-residue protein sequence, read N- to C-terminus: DNA ligase (673 aa).

NAD(+)-binding positions include 33–37, 82–83, and Glu115; these read DAEYD and SL. Lys117 (N6-AMP-lysine intermediate) is an active-site residue. Residues Arg138, Glu175, Lys292, and Lys316 each contribute to the NAD(+) site. Zn(2+) contacts are provided by Cys410, Cys413, Cys428, and Cys434. The BRCT domain occupies 593 to 673; sequence VGDNPFKEKT…TFLAWSKPYL (81 aa).

It belongs to the NAD-dependent DNA ligase family. LigA subfamily. The cofactor is Mg(2+). Mn(2+) serves as cofactor.

The catalysed reaction is NAD(+) + (deoxyribonucleotide)n-3'-hydroxyl + 5'-phospho-(deoxyribonucleotide)m = (deoxyribonucleotide)n+m + AMP + beta-nicotinamide D-nucleotide.. In terms of biological role, DNA ligase that catalyzes the formation of phosphodiester linkages between 5'-phosphoryl and 3'-hydroxyl groups in double-stranded DNA using NAD as a coenzyme and as the energy source for the reaction. It is essential for DNA replication and repair of damaged DNA. The sequence is that of DNA ligase from Pasteurella multocida (strain Pm70).